We begin with the raw amino-acid sequence, 506 residues long: Trans-cinnamate 4-monooxygenase (506 aa).

Residues L3–V23 traverse the membrane as a helical segment. Residues R213 to Q218 and A307 each bind (E)-cinnamate. C448 serves as a coordination point for heme.

Belongs to the cytochrome P450 family. The cofactor is heme.

Its subcellular location is the membrane. The catalysed reaction is (E)-cinnamate + reduced [NADPH--hemoprotein reductase] + O2 = (E)-4-coumarate + oxidized [NADPH--hemoprotein reductase] + H2O + H(+). Its pathway is phenylpropanoid metabolism; trans-4-coumarate biosynthesis; trans-4-coumarate from trans-cinnamate: step 1/1. Functionally, catalyzes the first oxidative step of the phenylpropanoid pathway in higher plants by transforming trans-cinnamate into p-coumarate. The compounds formed by this pathway are essential components for lignification, pollination, and defense against ultraviolet light, predators and pathogens. This chain is Trans-cinnamate 4-monooxygenase (CYP73A11), found in Glycine max (Soybean).